A 350-amino-acid chain; its full sequence is Holliday junction branch migration complex subunit RuvB (350 aa).

A large ATPase domain (RuvB-L) region spans residues 1–183 (MSAERLVNPH…FVAVHRLVFY (183 aa)). Residues Leu22, Arg23, Gly64, Lys67, Thr68, Ser69, 130 to 132 (EDF), Arg173, Tyr183, and Arg220 contribute to the ATP site. Thr68 is a Mg(2+) binding site. The segment at 184–254 (SDDAMTEIVS…VARDALAQLE (71 aa)) is small ATPAse domain (RuvB-S). The interval 257–350 (ELGLDENDRR…ESGPQQATLF (94 aa)) is head domain (RuvB-H). 2 residues coordinate DNA: Arg312 and Arg317. The tract at residues 331 to 350 (YPERTLPADDESGPQQATLF) is disordered.

The protein belongs to the RuvB family. In terms of assembly, homohexamer. Forms an RuvA(8)-RuvB(12)-Holliday junction (HJ) complex. HJ DNA is sandwiched between 2 RuvA tetramers; dsDNA enters through RuvA and exits via RuvB. An RuvB hexamer assembles on each DNA strand where it exits the tetramer. Each RuvB hexamer is contacted by two RuvA subunits (via domain III) on 2 adjacent RuvB subunits; this complex drives branch migration. In the full resolvosome a probable DNA-RuvA(4)-RuvB(12)-RuvC(2) complex forms which resolves the HJ.

Its subcellular location is the cytoplasm. The catalysed reaction is ATP + H2O = ADP + phosphate + H(+). In terms of biological role, the RuvA-RuvB-RuvC complex processes Holliday junction (HJ) DNA during genetic recombination and DNA repair, while the RuvA-RuvB complex plays an important role in the rescue of blocked DNA replication forks via replication fork reversal (RFR). RuvA specifically binds to HJ cruciform DNA, conferring on it an open structure. The RuvB hexamer acts as an ATP-dependent pump, pulling dsDNA into and through the RuvAB complex. RuvB forms 2 homohexamers on either side of HJ DNA bound by 1 or 2 RuvA tetramers; 4 subunits per hexamer contact DNA at a time. Coordinated motions by a converter formed by DNA-disengaged RuvB subunits stimulates ATP hydrolysis and nucleotide exchange. Immobilization of the converter enables RuvB to convert the ATP-contained energy into a lever motion, pulling 2 nucleotides of DNA out of the RuvA tetramer per ATP hydrolyzed, thus driving DNA branch migration. The RuvB motors rotate together with the DNA substrate, which together with the progressing nucleotide cycle form the mechanistic basis for DNA recombination by continuous HJ branch migration. Branch migration allows RuvC to scan DNA until it finds its consensus sequence, where it cleaves and resolves cruciform DNA. The chain is Holliday junction branch migration complex subunit RuvB from Chloroflexus aurantiacus (strain ATCC 29366 / DSM 635 / J-10-fl).